The primary structure comprises 426 residues: Enolase (426 aa).

Q163 is a binding site for (2R)-2-phosphoglycerate. E205 (proton donor) is an active-site residue. Mg(2+)-binding residues include D242, E283, and D310. (2R)-2-phosphoglycerate-binding residues include K335, R364, S365, and K386. The active-site Proton acceptor is K335.

Belongs to the enolase family. Mg(2+) serves as cofactor.

The protein localises to the cytoplasm. The protein resides in the secreted. Its subcellular location is the cell surface. It carries out the reaction (2R)-2-phosphoglycerate = phosphoenolpyruvate + H2O. Its pathway is carbohydrate degradation; glycolysis; pyruvate from D-glyceraldehyde 3-phosphate: step 4/5. Catalyzes the reversible conversion of 2-phosphoglycerate (2-PG) into phosphoenolpyruvate (PEP). It is essential for the degradation of carbohydrates via glycolysis. This chain is Enolase, found in Clavibacter sepedonicus (Clavibacter michiganensis subsp. sepedonicus).